The sequence spans 95 residues: Acylphosphatase 2 (95 aa).

The Acylphosphatase-like domain maps to 6 to 93 (RVIVTVQGRV…PLPPGFEVRP (88 aa)). Residues Arg-21 and Asn-39 contribute to the active site.

The protein belongs to the acylphosphatase family.

The enzyme catalyses an acyl phosphate + H2O = a carboxylate + phosphate + H(+). This Ralstonia nicotianae (strain ATCC BAA-1114 / GMI1000) (Ralstonia solanacearum) protein is Acylphosphatase 2 (acyP2).